The primary structure comprises 307 residues: Streptomycin 6-kinase (307 aa).

133–145 (LAGLLARLVSVPA) lines the streptomycin pocket. Residue D201 is the Proton acceptor of the active site.

This sequence belongs to the aminoglycoside phosphotransferase family.

The enzyme catalyses streptomycin + ATP = streptomycin 6-phosphate + ADP + H(+). In terms of biological role, the aminoglycoside phosphotransferases achieve inactivation of their antibiotic substrates by phosphorylation. The sequence is that of Streptomycin 6-kinase (sph) from Streptomyces glaucescens.